The sequence spans 362 residues: Histidine biosynthesis bifunctional protein HisB (362 aa).

Positions 1–173 (MQPTLFIDRD…TVTNCGKRPP (173 aa)) are histidinol-phosphatase. Catalysis depends on Asp8, which acts as the Nucleophile. Residues Asp8 and Asp10 each contribute to the Mg(2+) site. The active-site Proton donor is the Asp10. Zn(2+) is bound by residues Cys91, His93, Cys99, and Cys101. Asp128 is a Mg(2+) binding site. The tract at residues 174-362 (RFAEVIRQTK…NEMPSSKGVL (189 aa)) is imidazoleglycerol-phosphate dehydratase.

It in the N-terminal section; belongs to the histidinol-phosphatase family. In the C-terminal section; belongs to the imidazoleglycerol-phosphate dehydratase family. The cofactor is Mg(2+). Zn(2+) serves as cofactor.

The protein resides in the cytoplasm. It catalyses the reaction D-erythro-1-(imidazol-4-yl)glycerol 3-phosphate = 3-(imidazol-4-yl)-2-oxopropyl phosphate + H2O. The enzyme catalyses L-histidinol phosphate + H2O = L-histidinol + phosphate. The protein operates within amino-acid biosynthesis; L-histidine biosynthesis; L-histidine from 5-phospho-alpha-D-ribose 1-diphosphate: step 6/9. Its pathway is amino-acid biosynthesis; L-histidine biosynthesis; L-histidine from 5-phospho-alpha-D-ribose 1-diphosphate: step 8/9. The chain is Histidine biosynthesis bifunctional protein HisB from Haemophilus influenzae (strain 86-028NP).